The following is a 1047-amino-acid chain: Atrial natriuretic peptide receptor 2 (1047 aa).

A signal peptide spans 1 to 16 (MALPSLLLVVAALAGG). Residues 17-458 (VRPPGARNLT…DKTPLSTLAI (442 aa)) are Extracellular-facing. N-linked (GlcNAc...) asparagine glycosylation is found at N24 and N35. The cysteines at positions 75 and 101 are disulfide-linked. 5 N-linked (GlcNAc...) asparagine glycosylation sites follow: N161, N195, N244, N277, and N349. The chain crosses the membrane as a helical span at residues 459–478 (VALGTGITFIMFGVSSFLIF). Topologically, residues 479-1047 (RKLMLEKELA…GERKGPAGLL (569 aa)) are cytoplasmic. S513 carries the post-translational modification Phosphoserine. A Protein kinase domain is found at 513–786 (SRLTLSLRGS…PDFGQIKGFI (274 aa)). T516 carries the post-translational modification Phosphothreonine. 4 positions are modified to phosphoserine: S518, S522, S523, and S526. T529 carries the post-translational modification Phosphothreonine. Residues 861-991 (TIYFSDIVGF…DTVNTASRME (131 aa)) form the Guanylate cyclase domain.

It belongs to the adenylyl cyclase class-4/guanylyl cyclase family. Phosphorylated. Phosphorylation of the protein kinase-like domain is required for full activation by CNP. Post-translationally, glycosylated.

It is found in the cell membrane. It carries out the reaction GTP = 3',5'-cyclic GMP + diphosphate. In terms of biological role, receptor for the C-type natriuretic peptide NPPC/CNP hormone. Has guanylate cyclase activity upon binding of its ligand. May play a role in the regulation of skeletal growth. The chain is Atrial natriuretic peptide receptor 2 (NPR2) from Bos taurus (Bovine).